The chain runs to 391 residues: 1-deoxy-D-xylulose 5-phosphate reductoisomerase (391 aa).

NADPH is bound by residues threonine 17, glycine 18, serine 19, isoleucine 20, asparagine 47, and asparagine 130. Residue lysine 131 coordinates 1-deoxy-D-xylulose 5-phosphate. Glutamate 132 contributes to the NADPH binding site. Aspartate 156 contacts Mn(2+). Positions 157, 158, 182, and 205 each coordinate 1-deoxy-D-xylulose 5-phosphate. Glutamate 158 contacts Mn(2+). Residue glycine 211 coordinates NADPH. 4 residues coordinate 1-deoxy-D-xylulose 5-phosphate: serine 218, asparagine 223, lysine 224, and glutamate 227. Glutamate 227 is a binding site for Mn(2+).

This sequence belongs to the DXR family. It depends on Mg(2+) as a cofactor. Mn(2+) is required as a cofactor.

It carries out the reaction 2-C-methyl-D-erythritol 4-phosphate + NADP(+) = 1-deoxy-D-xylulose 5-phosphate + NADPH + H(+). The protein operates within isoprenoid biosynthesis; isopentenyl diphosphate biosynthesis via DXP pathway; isopentenyl diphosphate from 1-deoxy-D-xylulose 5-phosphate: step 1/6. Functionally, catalyzes the NADPH-dependent rearrangement and reduction of 1-deoxy-D-xylulose-5-phosphate (DXP) to 2-C-methyl-D-erythritol 4-phosphate (MEP). This chain is 1-deoxy-D-xylulose 5-phosphate reductoisomerase, found in Rhizobium meliloti (strain 1021) (Ensifer meliloti).